The chain runs to 641 residues: Soluble starch synthase 1, chloroplastic/amyloplastic (641 aa).

A chloroplast-targeting transit peptide spans 1–113 (MATAAGMGIG…DSIDKTIFVA (113 aa)). The interval 62–96 (TFLVPTSTPPAPTQSPAPAPTPPPLPDSGVGEIEP) is disordered. Pro residues predominate over residues 68–87 (STPPAPTQSPAPAPTPPPLP). Residue Lys-147 coordinates ADP-alpha-D-glucose.

The protein belongs to the glycosyltransferase 1 family. Bacterial/plant glycogen synthase subfamily.

It localises to the plastid. The protein localises to the chloroplast. The protein resides in the amyloplast. The catalysed reaction is [(1-&gt;4)-alpha-D-glucosyl](n) + ADP-alpha-D-glucose = [(1-&gt;4)-alpha-D-glucosyl](n+1) + ADP + H(+). The protein operates within glycan biosynthesis; starch biosynthesis. The protein is Soluble starch synthase 1, chloroplastic/amyloplastic of Oryza sativa subsp. indica (Rice).